A 123-amino-acid chain; its full sequence is MMGLAKTLLLASQLTAVVVATPTINNDNELTTKWPVCVKPTKVLDERIPTVKRGPVETPLPTQPGMVNNCNKFCWVQAGNKCYQVAMENHISLADFLKWNPGAGSDCRTLWANTYACVGVSKK.

The signal sequence occupies residues 1-20 (MMGLAKTLLLASQLTAVVVA). Positions 72 to 118 (KFCWVQAGNKCYQVAMENHISLADFLKWNPGAGSDCRTLWANTYACV) constitute a LysM domain.

It belongs to the secreted LysM effector family.

Its function is as follows. Might have a role in sequestration of chitin oligosaccharides (breakdown products of fungal cell walls that are released during invasion and act as triggers of host immunity) to dampen host defense. This Pochonia chlamydosporia (strain 123) (Metacordyceps chlamydosporia) protein is Secreted LysM effector Lys1.